Consider the following 91-residue polypeptide: Small ribosomal subunit protein uS15 (91 aa).

This sequence belongs to the universal ribosomal protein uS15 family. As to quaternary structure, part of the 30S ribosomal subunit. Forms a bridge to the 50S subunit in the 70S ribosome, contacting the 23S rRNA.

In terms of biological role, one of the primary rRNA binding proteins, it binds directly to 16S rRNA where it helps nucleate assembly of the platform of the 30S subunit by binding and bridging several RNA helices of the 16S rRNA. Functionally, forms an intersubunit bridge (bridge B4) with the 23S rRNA of the 50S subunit in the ribosome. In Deinococcus geothermalis (strain DSM 11300 / CIP 105573 / AG-3a), this protein is Small ribosomal subunit protein uS15.